Reading from the N-terminus, the 22-residue chain is Antimicrobial peptide 5 (22 aa).

Leu-22 is subject to Leucine amide.

In terms of tissue distribution, skin.

It is found in the secreted. Functionally, has very strong antimicrobial activity against Gram-positive bacterium S.aureus, Gram-negative bacterium E.coli and yeast C.albicans. Has strong hemolytic activity against human red blood cells. This Xenopus tropicalis (Western clawed frog) protein is Antimicrobial peptide 5.